A 424-amino-acid polypeptide reads, in one-letter code: Tyrosine--tRNA ligase (424 aa).

Tyr37 contacts L-tyrosine. A 'HIGH' region motif is present at residues 42–51; the sequence is PTADSLHLGH. The residue at position 144 (Lys144) is an N6-acetyllysine. L-tyrosine is bound by residues Tyr175 and Gln179. The short motif at 235-239 is the 'KMSKS' region element; that stretch reads KFGKT. Lys238 contributes to the ATP binding site. In terms of domain architecture, S4 RNA-binding spans 357–414; the sequence is ADLMQALVDSELQPSRGQARKTIASNAVTINGEKQSDPEYFFKEEDRLFGRFTLLRRG.

It belongs to the class-I aminoacyl-tRNA synthetase family. TyrS type 1 subfamily. Homodimer.

The protein resides in the cytoplasm. It catalyses the reaction tRNA(Tyr) + L-tyrosine + ATP = L-tyrosyl-tRNA(Tyr) + AMP + diphosphate + H(+). Functionally, catalyzes the attachment of tyrosine to tRNA(Tyr) in a two-step reaction: tyrosine is first activated by ATP to form Tyr-AMP and then transferred to the acceptor end of tRNA(Tyr). The chain is Tyrosine--tRNA ligase from Escherichia fergusonii (strain ATCC 35469 / DSM 13698 / CCUG 18766 / IAM 14443 / JCM 21226 / LMG 7866 / NBRC 102419 / NCTC 12128 / CDC 0568-73).